The primary structure comprises 54 residues: UPF0391 membrane protein Tbd_2238 (54 aa).

A run of 2 helical transmembrane segments spans residues 5–25 (ALVFFIIAIVAAVFGFSGIAA) and 28–48 (VGIAKILFVVFLIMAIATFVV).

Belongs to the UPF0391 family.

Its subcellular location is the cell membrane. This is UPF0391 membrane protein Tbd_2238 from Thiobacillus denitrificans (strain ATCC 25259 / T1).